The sequence spans 455 residues: 1-deoxy-D-xylulose 5-phosphate reductoisomerase (455 aa).

Residues threonine 30, glycine 31, serine 32, isoleucine 33, glutamine 63, and asparagine 159 each coordinate NADPH. Lysine 160 contacts 1-deoxy-D-xylulose 5-phosphate. Glutamate 161 contributes to the NADPH binding site. Mn(2+) is bound at residue aspartate 185. 2 residues coordinate 1-deoxy-D-xylulose 5-phosphate: serine 186 and glutamate 187. Residue glutamate 187 coordinates Mn(2+). A compositionally biased stretch (polar residues) spans 205–214 (YATAKQSIQP). A disordered region spans residues 205–233 (YATAKQSIQPESVRATDPPSSTTDSPAKT). Residues serine 246 and histidine 269 each contribute to the 1-deoxy-D-xylulose 5-phosphate site. Glycine 275 is an NADPH binding site. 1-deoxy-D-xylulose 5-phosphate-binding residues include serine 282, asparagine 287, lysine 288, and glutamate 291. A Mn(2+)-binding site is contributed by glutamate 291.

This sequence belongs to the DXR family. The cofactor is Mg(2+). Requires Mn(2+) as cofactor.

It carries out the reaction 2-C-methyl-D-erythritol 4-phosphate + NADP(+) = 1-deoxy-D-xylulose 5-phosphate + NADPH + H(+). It functions in the pathway isoprenoid biosynthesis; isopentenyl diphosphate biosynthesis via DXP pathway; isopentenyl diphosphate from 1-deoxy-D-xylulose 5-phosphate: step 1/6. In terms of biological role, catalyzes the NADPH-dependent rearrangement and reduction of 1-deoxy-D-xylulose-5-phosphate (DXP) to 2-C-methyl-D-erythritol 4-phosphate (MEP). This chain is 1-deoxy-D-xylulose 5-phosphate reductoisomerase, found in Rhodopirellula baltica (strain DSM 10527 / NCIMB 13988 / SH1).